A 348-amino-acid chain; its full sequence is MTAPSQVLKIRRPDDWHVHLRDGDMLKTVVPYTSEIYGRAIVMPNLASPITTVDAAIAYRQRILDAVPAGHDFTPLMTCYLTDSLDADELERGFHEGVFTAAKLYPANATTNSSHGVTSVDAIMPVLERMEKLGMPLLVHGEVTHAEVDIFDREARFIDTVMEPLRQRLTALKVVFEHITTKDAAQYVRDGNDYLAATITPQHLMFNRNDMLVGGIRPHLYCLPILKRNIHQQALRDLVASGFTRAFLGTDSAPHSRHRKETSCGCAGCFNAPSALGSYAAVFEEMNALAHFEAFCSLNGPQFYGLPVNTGWVELVRDEQQVPENIALADDSLVPFLAGETVRWSVKK.

Zn(2+)-binding residues include His17 and His19. Substrate is bound by residues 19–21 and Asn45; that span reads HLR. Positions 103, 140, and 178 each coordinate Zn(2+). At Lys103 the chain carries N6-carboxylysine. His140 is a binding site for substrate. A substrate-binding site is contributed by Leu223. Asp251 is a binding site for Zn(2+). The active site involves Asp251. The substrate site is built by His255 and Ala267.

Belongs to the metallo-dependent hydrolases superfamily. DHOase family. Class II DHOase subfamily. As to quaternary structure, homodimer. Zn(2+) is required as a cofactor.

The catalysed reaction is (S)-dihydroorotate + H2O = N-carbamoyl-L-aspartate + H(+). Its pathway is pyrimidine metabolism; UMP biosynthesis via de novo pathway; (S)-dihydroorotate from bicarbonate: step 3/3. Functionally, catalyzes the reversible cyclization of carbamoyl aspartate to dihydroorotate. This is Dihydroorotase from Salmonella agona (strain SL483).